Consider the following 162-residue polypeptide: RNA pyrophosphohydrolase (162 aa).

The region spanning 7–149 (EYRPCVGIML…KKEVYKKVIE (143 aa)) is the Nudix hydrolase domain. Residues 40-61 (GGVDEGEELEQAALRELLEEVG) carry the Nudix box motif.

The protein belongs to the Nudix hydrolase family. RppH subfamily. A divalent metal cation serves as cofactor.

Functionally, accelerates the degradation of transcripts by removing pyrophosphate from the 5'-end of triphosphorylated RNA, leading to a more labile monophosphorylated state that can stimulate subsequent ribonuclease cleavage. The protein is RNA pyrophosphohydrolase of Wolbachia pipientis subsp. Culex pipiens (strain wPip).